Here is a 313-residue protein sequence, read N- to C-terminus: Inner membrane ABC transporter permease protein YdcU (313 aa).

Over 1 to 25 the chain is Cytoplasmic; that stretch reads MAMNVLQSPSRPGLGKVSGFFWHNP. Residues 26–46 form a helical membrane-spanning segment; it reads GLGLFLLLLGPLMWFGIVYFG. Topologically, residues 47 to 92 are periplasmic; that stretch reads SLLTLLWQGFYTFDDFTMSVTPELTLANIRALFNPANYDIILRTLT. The region spanning 87–302 is the ABC transmembrane type-1 domain; that stretch reads ILRTLTMAVA…PIILIALYLA (216 aa). A helical membrane pass occupies residues 93–113; it reads MAVAVTIASAILAFPMAWYMA. The Cytoplasmic segment spans residues 114 to 122; the sequence is RYTSGKMKA. Residues 123 to 143 traverse the membrane as a helical segment; it reads FFYIAVMLPMWASYIVKAYAW. Over 144-154 the chain is Periplasmic; that stretch reads TLLLAKDGVAQ. A helical membrane pass occupies residues 155 to 175; sequence WFLQHLGLEPLLTAFLTLPAV. At 176-187 the chain is on the cytoplasmic side; it reads GGNTLSTSGLGR. The helical transmembrane segment at 188 to 208 threads the bilayer; that stretch reads FLVFLYIWLPFMILPVQAALE. Over 209–230 the chain is Periplasmic; it reads RLPPSLLQASADLGARPRQTFR. The helical transmembrane segment at 231 to 251 threads the bilayer; that stretch reads YVVLPLAIPGIAAGSIFTFSL. Residue Thr-252 is a topological domain, cytoplasmic. A helical membrane pass occupies residues 253 to 273; that stretch reads LGDFIVPQLVGPPGYFIGNMV. Over 274–283 the chain is Periplasmic; the sequence is YSQQGAIGNM. Residues 284 to 304 traverse the membrane as a helical segment; it reads PMAAAFTLVPIILIALYLAFV. Residues 305–313 lie on the Cytoplasmic side of the membrane; sequence KRLGAFDAL.

The protein belongs to the binding-protein-dependent transport system permease family. CysTW subfamily.

The protein resides in the cell inner membrane. Probably part of the ABC transporter complex YdcSTUV. Probably responsible for the translocation of the substrate across the membrane. This is Inner membrane ABC transporter permease protein YdcU (ydcU) from Escherichia coli (strain K12).